Consider the following 215-residue polypeptide: Ceramide-1-phosphate transfer protein (215 aa).

An N-acylsphingoid base 1-phosphate contacts are provided by Asp-57, Lys-61, Arg-107, Arg-111, and His-151.

This sequence belongs to the GLTP family.

It localises to the cytoplasm. Its subcellular location is the cytosol. The protein localises to the golgi apparatus. It is found in the trans-Golgi network membrane. The protein resides in the cell membrane. It localises to the endosome membrane. Its subcellular location is the nucleus outer membrane. The enzyme catalyses N-(hexadecanoyl)-sphing-4-enine-1-phosphate(in) = N-(hexadecanoyl)-sphing-4-enine-1-phosphate(out). It catalyses the reaction N-(9Z-octadecenoyl)-sphing-4-enine-1-phosphate(in) = N-(9Z-octadecenoyl)-sphing-4-enine-1-phosphate(out). Mediates the intracellular transfer of ceramide-1-phosphate (C1P) between organelle membranes and the cell membrane. Required for normal structure of the Golgi stacks. Can bind phosphoceramides with a variety of aliphatic chains, but has a preference for lipids with saturated C16:0 or monounsaturated C18:1 aliphatic chains, and is inefficient with phosphoceramides containing lignoceryl (C24:0). Plays a role in the regulation of the cellular levels of ceramide-1-phosphate, and thereby contributes to the regulation of phospholipase PLA2G4A activity and the release of arachidonic acid. Has no activity with galactosylceramide, lactosylceramide, sphingomyelin, phosphatidylcholine, phosphatidic acid and ceramide. C1P transfer is stimulated by phosphatidylserine in C1P source vesicles. Regulates autophagy and pyroptosis, but not apoptosis. The polypeptide is Ceramide-1-phosphate transfer protein (cptp) (Xenopus laevis (African clawed frog)).